Here is a 198-residue protein sequence, read N- to C-terminus: Ribonuclease HII (198 aa).

The RNase H type-2 domain occupies 11–198; it reads NLIAGVDEVG…GPVKRVLGLV (188 aa). 3 residues coordinate a divalent metal cation: Asp17, Glu18, and Asp109.

It belongs to the RNase HII family. The cofactor is Mn(2+). Mg(2+) serves as cofactor.

Its subcellular location is the cytoplasm. The catalysed reaction is Endonucleolytic cleavage to 5'-phosphomonoester.. Endonuclease that specifically degrades the RNA of RNA-DNA hybrids. The protein is Ribonuclease HII of Yersinia pseudotuberculosis serotype O:3 (strain YPIII).